A 250-amino-acid chain; its full sequence is L-ascorbate peroxidase 1, cytosolic (250 aa).

Residue histidine 42 is the Proton acceptor of the active site. The tract at residues 113-137 is disordered; sequence VPFHPGREDKPAPPPEGRLPDATKG. Residue histidine 163 participates in heme b binding. Residues threonine 164, threonine 180, asparagine 182, and aspartate 187 each contribute to the K(+) site.

It belongs to the peroxidase family. Ascorbate peroxidase subfamily. The cofactor is heme b. In terms of tissue distribution, expressed in roots, aerial vegetative parts and reproductive organs. Expressed in roots, leaves, stems and flowers.

Its subcellular location is the cytoplasm. It carries out the reaction L-ascorbate + H2O2 = L-dehydroascorbate + 2 H2O. Inhibited by p-chloromercuriphenylsulfonic acid (CMPSA). Its function is as follows. Plays a key role in hydrogen peroxide removal. This is L-ascorbate peroxidase 1, cytosolic from Oryza sativa subsp. japonica (Rice).